We begin with the raw amino-acid sequence, 89 residues long: Small ribosomal subunit protein bS20 (89 aa).

Positions 1–20 (MANHKSAEKRARQTIKRTER) are disordered.

This sequence belongs to the bacterial ribosomal protein bS20 family.

In terms of biological role, binds directly to 16S ribosomal RNA. The polypeptide is Small ribosomal subunit protein bS20 (Campylobacter curvus (strain 525.92)).